A 327-amino-acid chain; its full sequence is BarH-like 1 homeobox protein (327 aa).

Disordered regions lie at residues 1–90 (MEGS…AQSR), 113–181 (PYSS…PRKA), and 303–327 (LQGA…AQPR). Low complexity predominate over residues 33-54 (RSPLELSPRSESSSDCSSPASP). Residues 79 to 90 (QPGQLSAPAQSR) show a composition bias toward polar residues. Basic and acidic residues-rich tracts occupy residues 133-143 (AGEDFRDKLDK) and 152-166 (SEYK…EISS). The homeobox DNA-binding region spans 178–237 (PRKARTAFTDHQLAQLERSFERQKYLSVQDRMELAASLNLTDTQVKTWYQNRRTKWKRQT). Residues 308 to 318 (EPPPPLPPLPG) are compositionally biased toward pro residues.

Belongs to the BAR homeobox family.

It localises to the nucleus. The polypeptide is BarH-like 1 homeobox protein (Barhl1) (Mus musculus (Mouse)).